Reading from the N-terminus, the 461-residue chain is Probable ribonuclease FAU-1 (461 aa).

One can recognise an S1 motif domain in the interval 89–158 (GAVFYGEVTE…ARPSLATALR (70 aa)).

Belongs to the FAU-1 family.

Its function is as follows. Probable RNase involved in rRNA stability through maturation and/or degradation of precursor rRNAs. Binds to RNA in loop regions with AU-rich sequences. The protein is Probable ribonuclease FAU-1 of Natronomonas pharaonis (strain ATCC 35678 / DSM 2160 / CIP 103997 / JCM 8858 / NBRC 14720 / NCIMB 2260 / Gabara) (Halobacterium pharaonis).